The sequence spans 570 residues: Proline--tRNA ligase (570 aa).

Residues 238–257 (ARPAPAEHAEPRPLEKVETP) are disordered.

It belongs to the class-II aminoacyl-tRNA synthetase family. ProS type 1 subfamily. Homodimer.

Its subcellular location is the cytoplasm. The enzyme catalyses tRNA(Pro) + L-proline + ATP = L-prolyl-tRNA(Pro) + AMP + diphosphate. Its function is as follows. Catalyzes the attachment of proline to tRNA(Pro) in a two-step reaction: proline is first activated by ATP to form Pro-AMP and then transferred to the acceptor end of tRNA(Pro). As ProRS can inadvertently accommodate and process non-cognate amino acids such as alanine and cysteine, to avoid such errors it has two additional distinct editing activities against alanine. One activity is designated as 'pretransfer' editing and involves the tRNA(Pro)-independent hydrolysis of activated Ala-AMP. The other activity is designated 'posttransfer' editing and involves deacylation of mischarged Ala-tRNA(Pro). The misacylated Cys-tRNA(Pro) is not edited by ProRS. The polypeptide is Proline--tRNA ligase (Geobacter sulfurreducens (strain ATCC 51573 / DSM 12127 / PCA)).